The sequence spans 50 residues: uncharacterized protein (50 aa).

Residues 10-29 traverse the membrane as a helical segment; that stretch reads LFFYYPFFIIFLYIYLVFFI.

The protein resides in the plastid. The protein localises to the chloroplast membrane. This is an uncharacterized protein from Marchantia polymorpha (Common liverwort).